We begin with the raw amino-acid sequence, 196 residues long: Vacuolar iron transporter homolog 2 (196 aa).

Topologically, residues 1 to 31 (MDQSGSNTNMDIEKESTTFDYSKRSQWLRAA) are cytoplasmic. The helical transmembrane segment at 32-52 (VLGANDGLVSTASLMMGVGAV) threads the bilayer. Over 53 to 59 (KHDVKAM) the chain is Vacuolar. The helical transmembrane segment at 60–80 (ILSGFAGMVAGACSMAIGEFV) threads the bilayer. The Cytoplasmic portion of the chain corresponds to 81–112 (SVYSQYDIEVAQMERDSVEIEKEKLPSPMQAA). A helical membrane pass occupies residues 113–133 (AASALAFSAGAIVPLLAAAFV). The Vacuolar portion of the chain corresponds to 134–139 (KEYKMR). A helical membrane pass occupies residues 140 to 160 (IISVVVAVTVALMVFGWLGAA). Over 161 to 172 (LGKAPAVRSSAR) the chain is Cytoplasmic. The helical transmembrane segment at 173 to 193 (VLFGGWLAMAVTFGLTKLIGL) threads the bilayer. At 194–196 (YGL) the chain is on the vacuolar side.

The protein belongs to the CCC1 family. In terms of tissue distribution, expressed in roots, leaves and inflorescences.

The protein resides in the vacuole membrane. It catalyses the reaction Fe(2+)(in) = Fe(2+)(out). Functionally, vacuolar iron transporter involved in the transfer of iron ions from the cytosol to the vacuole for intracellular iron storage. Involved in regulation of cellular iron homeostasis. Vacuolar iron storage is required for seed embryo and seedling development. In Arabidopsis thaliana (Mouse-ear cress), this protein is Vacuolar iron transporter homolog 2.